A 104-amino-acid polypeptide reads, in one-letter code: Large ribosomal subunit protein uL24 (104 aa).

Belongs to the universal ribosomal protein uL24 family. In terms of assembly, part of the 50S ribosomal subunit.

Its function is as follows. One of two assembly initiator proteins, it binds directly to the 5'-end of the 23S rRNA, where it nucleates assembly of the 50S subunit. Functionally, one of the proteins that surrounds the polypeptide exit tunnel on the outside of the subunit. The sequence is that of Large ribosomal subunit protein uL24 from Shewanella baltica (strain OS223).